The chain runs to 267 residues: Tryptophan synthase alpha chain (267 aa).

Active-site proton acceptor residues include Glu-49 and Asp-60.

It belongs to the TrpA family. In terms of assembly, tetramer of two alpha and two beta chains.

It catalyses the reaction (1S,2R)-1-C-(indol-3-yl)glycerol 3-phosphate + L-serine = D-glyceraldehyde 3-phosphate + L-tryptophan + H2O. It participates in amino-acid biosynthesis; L-tryptophan biosynthesis; L-tryptophan from chorismate: step 5/5. The alpha subunit is responsible for the aldol cleavage of indoleglycerol phosphate to indole and glyceraldehyde 3-phosphate. This is Tryptophan synthase alpha chain from Salinispora arenicola (strain CNS-205).